A 121-amino-acid polypeptide reads, in one-letter code: Large ribosomal subunit protein bL12 (121 aa).

The protein belongs to the bacterial ribosomal protein bL12 family. Homodimer. Part of the ribosomal stalk of the 50S ribosomal subunit. Forms a multimeric L10(L12)X complex, where L10 forms an elongated spine to which 2 to 4 L12 dimers bind in a sequential fashion. Binds GTP-bound translation factors.

In terms of biological role, forms part of the ribosomal stalk which helps the ribosome interact with GTP-bound translation factors. Is thus essential for accurate translation. In Tolumonas auensis (strain DSM 9187 / NBRC 110442 / TA 4), this protein is Large ribosomal subunit protein bL12.